The primary structure comprises 956 residues: Angiomotin-like protein 1 (956 aa).

The segment at glutamine 197 to lysine 246 is disordered. A phosphoserine mark is found at serine 241 and serine 269. Positions arginine 259 to leucine 279 form a coiled coil. Disordered stretches follow at residues glycine 274–serine 322, proline 382–valine 405, and leucine 411–leucine 430. Residues serine 282 to proline 294 are compositionally biased toward gly residues. Residue serine 295 is modified to Phosphoserine. Residues proline 382 to alanine 398 are compositionally biased toward polar residues. 2 coiled-coil regions span residues valine 438 to arginine 639 and alanine 665 to glutamate 694. Serine 720 is modified (phosphoserine). A coiled-coil region spans residues serine 729–isoleucine 762. The interval glutamine 773–lysine 823 is disordered. Phosphoserine is present on residues serine 793, serine 805, and serine 828. Polar residues predominate over residues glycine 802–leucine 815. 2 disordered regions span residues alanine 841–aspartate 880 and proline 894–proline 944. Low complexity predominate over residues serine 852 to alanine 866. Serine 900 is subject to Phosphoserine. Position 902 is a phosphothreonine (threonine 902). Residue serine 906 is modified to Phosphoserine. Positions glutamate 953–isoleucine 956 match the PDZ-binding motif.

The protein belongs to the angiomotin family. In terms of processing, polyubiquitinated by NEDD4, leading to proteasomal degradation.

It is found in the cell junction. The protein resides in the tight junction. In terms of biological role, inhibits the Wnt/beta-catenin signaling pathway, probably by recruiting CTNNB1 to recycling endosomes and hence preventing its translocation to the nucleus. The polypeptide is Angiomotin-like protein 1 (AMOTL1) (Homo sapiens (Human)).